Here is a 212-residue protein sequence, read N- to C-terminus: Guanylate kinase (212 aa).

One can recognise a Guanylate kinase-like domain in the interval 14 to 192 (GTALVICAPS…AYDELRATYL (179 aa)). 21-28 (APSGTGKT) lines the ATP pocket.

Belongs to the guanylate kinase family.

The protein resides in the cytoplasm. It carries out the reaction GMP + ATP = GDP + ADP. Its function is as follows. Essential for recycling GMP and indirectly, cGMP. In Lawsonia intracellularis (strain PHE/MN1-00), this protein is Guanylate kinase.